A 293-amino-acid polypeptide reads, in one-letter code: Nucleotide-binding protein BCG9842_B5683 (293 aa).

14 to 21 (GMSGAGKT) is an ATP binding site. 65–68 (DLRG) contacts GTP.

The protein belongs to the RapZ-like family.

In terms of biological role, displays ATPase and GTPase activities. The polypeptide is Nucleotide-binding protein BCG9842_B5683 (Bacillus cereus (strain G9842)).